The primary structure comprises 99 residues: UPF0125 protein PM0166 (99 aa).

The protein belongs to the UPF0125 (RnfH) family.

The protein is UPF0125 protein PM0166 of Pasteurella multocida (strain Pm70).